The sequence spans 262 residues: Acetaldehyde dehydrogenase 7 (262 aa).

10-13 (SGNI) provides a ligand contact to NAD(+). Cysteine 128 serves as the catalytic Acyl-thioester intermediate. 159-167 (SAGPGTRAN) is an NAD(+) binding site.

It belongs to the acetaldehyde dehydrogenase family.

The enzyme catalyses acetaldehyde + NAD(+) + CoA = acetyl-CoA + NADH + H(+). The chain is Acetaldehyde dehydrogenase 7 from Rhodococcus jostii (strain RHA1).